Consider the following 547-residue polypeptide: Cellodextrinase (547 aa).

The active-site Nucleophile is Asp148. Residues His474, Asp520, and Glu529 contribute to the active site.

It belongs to the glycosyl hydrolase 9 (cellulase E) family.

It is found in the secreted. The catalysed reaction is Endohydrolysis of (1-&gt;4)-beta-D-glucosidic linkages in cellulose, lichenin and cereal beta-D-glucans.. Is not inhibited by methylcellulose. Glycoside hydrolase that rapidly hydrolyzes short-chain cellodextrins to yield either cellobiose or cellobiose and glucose as end products; cellobiose is not hydrolyzed further. Also shows limited activity against endoglucanase specific substrates (carboxymethylcellulose (CMC), lichenan, laminarin and xylan). The protein is Cellodextrinase of Butyrivibrio fibrisolvens.